We begin with the raw amino-acid sequence, 197 residues long: Probable chorismate pyruvate-lyase 2 (197 aa).

Residues 1-14 (MRFDAADAHWRETP) show a composition bias toward basic and acidic residues. The segment at 1 to 23 (MRFDAADAHWRETPRPGASSAQK) is disordered. Substrate is bound by residues Arg-73, Leu-111, and Glu-173.

The protein belongs to the UbiC family.

The protein localises to the cytoplasm. The catalysed reaction is chorismate = 4-hydroxybenzoate + pyruvate. It functions in the pathway cofactor biosynthesis; ubiquinone biosynthesis. Its function is as follows. Removes the pyruvyl group from chorismate, with concomitant aromatization of the ring, to provide 4-hydroxybenzoate (4HB) for the ubiquinone pathway. This is Probable chorismate pyruvate-lyase 2 from Burkholderia pseudomallei (strain 1710b).